A 248-amino-acid polypeptide reads, in one-letter code: tRNA (guanine-N(1)-)-methyltransferase (248 aa).

Residues Gly113 and 133–138 (VGDYVL) contribute to the S-adenosyl-L-methionine site.

This sequence belongs to the RNA methyltransferase TrmD family. In terms of assembly, homodimer.

The protein resides in the cytoplasm. The catalysed reaction is guanosine(37) in tRNA + S-adenosyl-L-methionine = N(1)-methylguanosine(37) in tRNA + S-adenosyl-L-homocysteine + H(+). Its function is as follows. Specifically methylates guanosine-37 in various tRNAs. The polypeptide is tRNA (guanine-N(1)-)-methyltransferase (Shewanella sp. (strain ANA-3)).